A 289-amino-acid polypeptide reads, in one-letter code: NAC domain-containing protein 2 (289 aa).

The region spanning 7–158 is the NAC domain; sequence LPPGFRFHPT…DWVLCRIYNK (152 aa).

As to quaternary structure, interacts with KIN10 and KIN11.

It is found in the nucleus. This Arabidopsis thaliana (Mouse-ear cress) protein is NAC domain-containing protein 2 (NAC002).